Reading from the N-terminus, the 255-residue chain is Type III pantothenate kinase (255 aa).

Residue 6 to 13 coordinates ATP; that stretch reads DVGNTNTV. 108-111 is a substrate binding site; the sequence is GADR. Asp110 serves as the catalytic Proton acceptor. Asp130 contributes to the K(+) binding site. Thr133 contributes to the ATP binding site. Position 185 (Thr185) interacts with substrate.

Belongs to the type III pantothenate kinase family. As to quaternary structure, homodimer. Requires NH4(+) as cofactor. K(+) serves as cofactor.

The protein resides in the cytoplasm. The enzyme catalyses (R)-pantothenate + ATP = (R)-4'-phosphopantothenate + ADP + H(+). Its pathway is cofactor biosynthesis; coenzyme A biosynthesis; CoA from (R)-pantothenate: step 1/5. In terms of biological role, catalyzes the phosphorylation of pantothenate (Pan), the first step in CoA biosynthesis. This is Type III pantothenate kinase from Hyphomonas neptunium (strain ATCC 15444).